The following is a 266-amino-acid chain: Zinc finger protein CG30 (266 aa).

Residues 8–63 (CNICFSVAEIKNYFMQPIDRLTMIPVLELDTCKHQLCSMCIRKIRKRKKTPCPLCR) form an RING-type zinc finger.

It is found in the host nucleus. Functionally, plays a role in the proper expression of late and very late genes. The chain is Zinc finger protein CG30 (CG30) from Bombyx mori nuclear polyhedrosis virus (BmNPV).